The sequence spans 217 residues: Probable GTP-binding protein EngB (217 aa).

One can recognise an EngB-type G domain in the interval G27–A201. GTP-binding positions include G35–S42, G62–L66, D80–G83, T147–D150, and F180–S182. Positions 42 and 64 each coordinate Mg(2+).

This sequence belongs to the TRAFAC class TrmE-Era-EngA-EngB-Septin-like GTPase superfamily. EngB GTPase family. It depends on Mg(2+) as a cofactor.

In terms of biological role, necessary for normal cell division and for the maintenance of normal septation. This chain is Probable GTP-binding protein EngB, found in Aeromonas salmonicida (strain A449).